A 146-amino-acid chain; its full sequence is Chorion class A protein Ld3/Ld29 (146 aa).

The first 21 residues, 1–21, serve as a signal peptide directing secretion; the sequence is MNTFALLSVFIQACLVQSVFS.

This sequence belongs to the chorion protein family.

Functionally, this protein is one of many from the eggshell of the gypsy moth. This Lymantria dispar (Gypsy moth) protein is Chorion class A protein Ld3/Ld29.